The sequence spans 172 residues: Large ribosomal subunit protein uL10 (172 aa).

Belongs to the universal ribosomal protein uL10 family. As to quaternary structure, part of the ribosomal stalk of the 50S ribosomal subunit. The N-terminus interacts with L11 and the large rRNA to form the base of the stalk. The C-terminus forms an elongated spine to which L12 dimers bind in a sequential fashion forming a multimeric L10(L12)X complex.

Functionally, forms part of the ribosomal stalk, playing a central role in the interaction of the ribosome with GTP-bound translation factors. The sequence is that of Large ribosomal subunit protein uL10 (rplJ) from Liberibacter africanus subsp. capensis.